Reading from the N-terminus, the 90-residue chain is Probable Fe(2+)-trafficking protein (90 aa).

It belongs to the Fe(2+)-trafficking protein family. As to quaternary structure, monomer.

In terms of biological role, could be a mediator in iron transactions between iron acquisition and iron-requiring processes, such as synthesis and/or repair of Fe-S clusters in biosynthetic enzymes. The chain is Probable Fe(2+)-trafficking protein from Yersinia enterocolitica serotype O:8 / biotype 1B (strain NCTC 13174 / 8081).